The following is a 344-amino-acid chain: Ferrochelatase (344 aa).

Fe cation is bound by residues histidine 190 and glutamate 270.

It belongs to the ferrochelatase family.

It is found in the cytoplasm. The enzyme catalyses heme b + 2 H(+) = protoporphyrin IX + Fe(2+). The protein operates within porphyrin-containing compound metabolism; protoheme biosynthesis; protoheme from protoporphyrin-IX: step 1/1. Catalyzes the ferrous insertion into protoporphyrin IX. The polypeptide is Ferrochelatase (Rickettsia felis (strain ATCC VR-1525 / URRWXCal2) (Rickettsia azadi)).